The sequence spans 216 residues: Adenylate kinase (216 aa).

Position 10–15 (10–15 (GAGKGT)) interacts with ATP. Residues 30 to 59 (STGDIFRANIKEKTPLGIEAKRYMDNGQLV) form an NMP region. AMP is bound by residues Thr-31, Arg-36, 57-59 (QLV), 85-88 (GFPR), and Gln-92. An LID region spans residues 126–163 (GRRVCTSCGASYHIRFNPPKIEGKCDICDNELIQRKDD). Arg-127 provides a ligand contact to ATP. Positions 130 and 133 each coordinate Zn(2+). 136–137 (SY) is a binding site for ATP. Residues Cys-150 and Cys-153 each coordinate Zn(2+). Residues Arg-160 and Arg-171 each contribute to the AMP site. Position 199 (Glu-199) interacts with ATP.

Belongs to the adenylate kinase family. In terms of assembly, monomer.

The protein localises to the cytoplasm. The catalysed reaction is AMP + ATP = 2 ADP. The protein operates within purine metabolism; AMP biosynthesis via salvage pathway; AMP from ADP: step 1/1. Catalyzes the reversible transfer of the terminal phosphate group between ATP and AMP. Plays an important role in cellular energy homeostasis and in adenine nucleotide metabolism. The sequence is that of Adenylate kinase from Clostridium botulinum (strain Loch Maree / Type A3).